We begin with the raw amino-acid sequence, 92 residues long: MARSLKKGPFVADHLLKKIESLNAQGEKKVIITWSRASIIVPGMIGHTIAVHNGREHLPVYITDLMVGHKLGEFAPTRTFRGHAKSDKKSRR.

This sequence belongs to the universal ribosomal protein uS19 family.

The protein resides in the plastid. It localises to the chloroplast. Functionally, protein S19 forms a complex with S13 that binds strongly to the 16S ribosomal RNA. The chain is Small ribosomal subunit protein uS19c from Staurastrum punctulatum (Green alga).